We begin with the raw amino-acid sequence, 411 residues long: UPF0761 membrane protein PSPA7_4558 (411 aa).

The next 6 membrane-spanning stretches (helical) occupy residues 36–56 (LFAV…IPAF), 92–112 (HLTW…LVTI), 132–152 (FLLY…GFAV), 174–194 (LLGL…YSAV), 207–229 (GGMF…VSLF), and 244–264 (IFLL…VLVC).

It belongs to the UPF0761 family.

The protein resides in the cell inner membrane. The sequence is that of UPF0761 membrane protein PSPA7_4558 from Pseudomonas paraeruginosa (strain DSM 24068 / PA7) (Pseudomonas aeruginosa (strain PA7)).